Reading from the N-terminus, the 269-residue chain is Adenosylcobinamide-GDP ribazoletransferase (269 aa).

Helical transmembrane passes span Q8 to I28, Y41 to L61, V70 to A90, I114 to L136, and V196 to V216.

The protein belongs to the CobS family. It depends on Mg(2+) as a cofactor.

It is found in the cell inner membrane. It catalyses the reaction alpha-ribazole + adenosylcob(III)inamide-GDP = adenosylcob(III)alamin + GMP + H(+). The enzyme catalyses alpha-ribazole 5'-phosphate + adenosylcob(III)inamide-GDP = adenosylcob(III)alamin 5'-phosphate + GMP + H(+). The protein operates within cofactor biosynthesis; adenosylcobalamin biosynthesis; adenosylcobalamin from cob(II)yrinate a,c-diamide: step 7/7. In terms of biological role, joins adenosylcobinamide-GDP and alpha-ribazole to generate adenosylcobalamin (Ado-cobalamin). Also synthesizes adenosylcobalamin 5'-phosphate from adenosylcobinamide-GDP and alpha-ribazole 5'-phosphate. The chain is Adenosylcobinamide-GDP ribazoletransferase from Pseudoalteromonas atlantica (strain T6c / ATCC BAA-1087).